The sequence spans 307 residues: Sesquiterpene synthase-like protein Agr10 (307 aa).

The segment at 287-307 (GRYFGDRGPENQSDIPTSSNR) is disordered. The segment covering 296–307 (ENQSDIPTSSNR) has biased composition (polar residues).

It belongs to the terpene synthase family.

The polypeptide is Sesquiterpene synthase-like protein Agr10 (Cyclocybe aegerita (Black poplar mushroom)).